Reading from the N-terminus, the 216-residue chain is SHKVSGGLHGVGVSVVNALSSKLQLTIHRAGQIHEQEYQHGDPQYPLKVVGETSTTGTTVRFWPSGDTFSQTIFNVDILARRLRELSFLNAGVKIVLRDERVNFEHIYAYEGGLSEKSALDIAGLPGKLADCQEKDPALSELYLVEGDSPGGSAKQGRNRKMQAILPLKGKILNVERARFDKMISSQEVGTLITALGCGIGREEYNPDKLRYHKII.

One can recognise a Toprim domain in the interval 140 to 216 (SELYLVEGDS…PDKLRYHKII (77 aa)).

The protein belongs to the type II topoisomerase GyrB family. In terms of assembly, heterotetramer, composed of two GyrA and two GyrB chains. In the heterotetramer, GyrA contains the active site tyrosine that forms a transient covalent intermediate with DNA, while GyrB binds cofactors and catalyzes ATP hydrolysis.

Its subcellular location is the cytoplasm. It carries out the reaction ATP-dependent breakage, passage and rejoining of double-stranded DNA.. In terms of biological role, a type II topoisomerase that negatively supercoils closed circular double-stranded (ds) DNA in an ATP-dependent manner to modulate DNA topology and maintain chromosomes in an underwound state. Negative supercoiling favors strand separation, and DNA replication, transcription, recombination and repair, all of which involve strand separation. Also able to catalyze the interconversion of other topological isomers of dsDNA rings, including catenanes and knotted rings. Type II topoisomerases break and join 2 DNA strands simultaneously in an ATP-dependent manner. The protein is DNA gyrase subunit B (gyrB) of Acinetobacter sp. (strain ATCC 33308 / BD413 ErpE27).